The primary structure comprises 522 residues: Transmembrane protein 213R (522 aa).

2 helical membrane passes run 33–50 (NTIT…LLFG) and 55–72 (SLYI…IYSQ).

It belongs to the IIV-6 213R family.

The protein resides in the membrane. The polypeptide is Transmembrane protein 213R (Invertebrate iridescent virus 6 (IIV-6)).